Here is a 91-residue protein sequence, read N- to C-terminus: Cytochrome b-c1 complex subunit 6, mitochondrial (91 aa).

The N-terminal 13 residues, methionine 1–serine 13, are a transit peptide targeting the mitochondrion. Positions methionine 1–leucine 30 are disordered. Acidic residues predominate over residues lysine 17–valine 27. 2 disulfide bridges follow: cysteine 37–cysteine 81 and cysteine 53–cysteine 67. Lysine 42 is subject to N6-acetyllysine. The residue at position 85 (lysine 85) is an N6-acetyllysine.

It belongs to the UQCRH/QCR6 family. In terms of assembly, component of the ubiquinol-cytochrome c oxidoreductase (cytochrome b-c1 complex, complex III, CIII), a multisubunit enzyme composed of 11 subunits. The complex is composed of 3 respiratory subunits cytochrome b, cytochrome c1 and Rieske protein UQCRFS1, 2 core protein subunits UQCRC1/QCR1 and UQCRC2/QCR2, and 6 low-molecular weight protein subunits UQCRH/QCR6, UQCRB/QCR7, UQCRQ/QCR8, UQCR10/QCR9, UQCR11/QCR10 and subunit 9, the cleavage product of Rieske protein UQCRFS1. The complex exists as an obligatory dimer and forms supercomplexes (SCs) in the inner mitochondrial membrane with NADH-ubiquinone oxidoreductase (complex I, CI) and cytochrome c oxidase (complex IV, CIV), resulting in different assemblies (supercomplex SCI(1)III(2)IV(1) and megacomplex MCI(2)III(2)IV(2)).

The protein resides in the mitochondrion inner membrane. In terms of biological role, component of the ubiquinol-cytochrome c oxidoreductase, a multisubunit transmembrane complex that is part of the mitochondrial electron transport chain which drives oxidative phosphorylation. The respiratory chain contains 3 multisubunit complexes succinate dehydrogenase (complex II, CII), ubiquinol-cytochrome c oxidoreductase (cytochrome b-c1 complex, complex III, CIII) and cytochrome c oxidase (complex IV, CIV), that cooperate to transfer electrons derived from NADH and succinate to molecular oxygen, creating an electrochemical gradient over the inner membrane that drives transmembrane transport and the ATP synthase. The cytochrome b-c1 complex catalyzes electron transfer from ubiquinol to cytochrome c, linking this redox reaction to translocation of protons across the mitochondrial inner membrane, with protons being carried across the membrane as hydrogens on the quinol. In the process called Q cycle, 2 protons are consumed from the matrix, 4 protons are released into the intermembrane space and 2 electrons are passed to cytochrome c. In Bos taurus (Bovine), this protein is Cytochrome b-c1 complex subunit 6, mitochondrial (UQCRH).